The sequence spans 475 residues: Aspartyl/glutamyl-tRNA(Asn/Gln) amidotransferase subunit B (475 aa).

Belongs to the GatB/GatE family. GatB subfamily. In terms of assembly, heterotrimer of A, B and C subunits.

The enzyme catalyses L-glutamyl-tRNA(Gln) + L-glutamine + ATP + H2O = L-glutaminyl-tRNA(Gln) + L-glutamate + ADP + phosphate + H(+). It catalyses the reaction L-aspartyl-tRNA(Asn) + L-glutamine + ATP + H2O = L-asparaginyl-tRNA(Asn) + L-glutamate + ADP + phosphate + 2 H(+). In terms of biological role, allows the formation of correctly charged Asn-tRNA(Asn) or Gln-tRNA(Gln) through the transamidation of misacylated Asp-tRNA(Asn) or Glu-tRNA(Gln) in organisms which lack either or both of asparaginyl-tRNA or glutaminyl-tRNA synthetases. The reaction takes place in the presence of glutamine and ATP through an activated phospho-Asp-tRNA(Asn) or phospho-Glu-tRNA(Gln). This Chlorobium luteolum (strain DSM 273 / BCRC 81028 / 2530) (Pelodictyon luteolum) protein is Aspartyl/glutamyl-tRNA(Asn/Gln) amidotransferase subunit B.